The following is a 105-amino-acid chain: Urease subunit beta (105 aa).

It belongs to the urease beta subunit family. As to quaternary structure, heterotrimer of UreA (gamma), UreB (beta) and UreC (alpha) subunits. Three heterotrimers associate to form the active enzyme.

It is found in the cytoplasm. The enzyme catalyses urea + 2 H2O + H(+) = hydrogencarbonate + 2 NH4(+). It functions in the pathway nitrogen metabolism; urea degradation; CO(2) and NH(3) from urea (urease route): step 1/1. This is Urease subunit beta from Shewanella halifaxensis (strain HAW-EB4).